The primary structure comprises 519 residues: ATP synthase subunit alpha (519 aa).

Residue 174-181 (GDRQTGKT) coordinates ATP.

Belongs to the ATPase alpha/beta chains family. F-type ATPases have 2 components, CF(1) - the catalytic core - and CF(0) - the membrane proton channel. CF(1) has five subunits: alpha(3), beta(3), gamma(1), delta(1), epsilon(1). CF(0) has three main subunits: a(1), b(2) and c(9-12). The alpha and beta chains form an alternating ring which encloses part of the gamma chain. CF(1) is attached to CF(0) by a central stalk formed by the gamma and epsilon chains, while a peripheral stalk is formed by the delta and b chains.

It is found in the cell inner membrane. It carries out the reaction ATP + H2O + 4 H(+)(in) = ADP + phosphate + 5 H(+)(out). In terms of biological role, produces ATP from ADP in the presence of a proton gradient across the membrane. The alpha chain is a regulatory subunit. The sequence is that of ATP synthase subunit alpha from Paracidovorax citrulli (strain AAC00-1) (Acidovorax citrulli).